We begin with the raw amino-acid sequence, 282 residues long: Phosphatidylserine decarboxylase proenzyme (282 aa).

Residues aspartate 88, histidine 144, and serine 247 each act as charge relay system; for autoendoproteolytic cleavage activity in the active site. Residue serine 247 is the Schiff-base intermediate with substrate; via pyruvic acid; for decarboxylase activity of the active site. Pyruvic acid (Ser); by autocatalysis is present on serine 247.

Belongs to the phosphatidylserine decarboxylase family. PSD-B subfamily. Prokaryotic type I sub-subfamily. In terms of assembly, heterodimer of a large membrane-associated beta subunit and a small pyruvoyl-containing alpha subunit. Requires pyruvate as cofactor. In terms of processing, is synthesized initially as an inactive proenzyme. Formation of the active enzyme involves a self-maturation process in which the active site pyruvoyl group is generated from an internal serine residue via an autocatalytic post-translational modification. Two non-identical subunits are generated from the proenzyme in this reaction, and the pyruvate is formed at the N-terminus of the alpha chain, which is derived from the carboxyl end of the proenzyme. The autoendoproteolytic cleavage occurs by a canonical serine protease mechanism, in which the side chain hydroxyl group of the serine supplies its oxygen atom to form the C-terminus of the beta chain, while the remainder of the serine residue undergoes an oxidative deamination to produce ammonia and the pyruvoyl prosthetic group on the alpha chain. During this reaction, the Ser that is part of the protease active site of the proenzyme becomes the pyruvoyl prosthetic group, which constitutes an essential element of the active site of the mature decarboxylase.

The protein resides in the cell membrane. The catalysed reaction is a 1,2-diacyl-sn-glycero-3-phospho-L-serine + H(+) = a 1,2-diacyl-sn-glycero-3-phosphoethanolamine + CO2. Its pathway is phospholipid metabolism; phosphatidylethanolamine biosynthesis; phosphatidylethanolamine from CDP-diacylglycerol: step 2/2. Functionally, catalyzes the formation of phosphatidylethanolamine (PtdEtn) from phosphatidylserine (PtdSer). The polypeptide is Phosphatidylserine decarboxylase proenzyme (Xanthomonas campestris pv. campestris (strain 8004)).